The chain runs to 366 residues: Glutathione S-transferase omega-like 3 (366 aa).

Cys-46 is an active-site residue. One can recognise a GST C-terminal domain in the interval 197-349 (PRSLEAQITE…LGYTRSQPRV (153 aa)).

It belongs to the GST superfamily. Omega family.

It is found in the cytoplasm. The catalysed reaction is RX + glutathione = an S-substituted glutathione + a halide anion + H(+). Functionally, active as '1-Cys' thiol transferase against beta-hydroxyethyl disulfide (HED), as dehydroascorbate reductase and as dimethylarsinic acid reductase, while not active against the standard GST substrate 1-chloro-2,4-dinitrobenzene (CDNB). The protein is Glutathione S-transferase omega-like 3 (GTO3) of Saccharomyces cerevisiae (strain ATCC 204508 / S288c) (Baker's yeast).